The chain runs to 721 residues: Glycine--tRNA ligase beta subunit (721 aa).

It belongs to the class-II aminoacyl-tRNA synthetase family. In terms of assembly, tetramer of two alpha and two beta subunits.

Its subcellular location is the cytoplasm. The catalysed reaction is tRNA(Gly) + glycine + ATP = glycyl-tRNA(Gly) + AMP + diphosphate. The sequence is that of Glycine--tRNA ligase beta subunit from Sinorhizobium fredii (strain NBRC 101917 / NGR234).